The sequence spans 396 residues: Obg-like ATPase 1 (396 aa).

One can recognise an OBG-type G domain in the interval 23–283 (LKIGIVGLPN…LSAEERQKYL (261 aa)). Position 32–37 (32–37 (NVGKST)) interacts with ATP. Residues Ser36 and Thr56 each coordinate Mg(2+). Leu231 is an ATP binding site. The short motif at 267–274 (LELRLQEL) is the Nuclear export signal element. Lys294 bears the N6-acetyllysine mark. Residues 304–387 (QLEYFFTAGP…EDGDIIFFKF (84 aa)) enclose the TGS domain.

Belongs to the TRAFAC class OBG-HflX-like GTPase superfamily. OBG GTPase family. YchF/OLA1 subfamily. As to quaternary structure, monomer. It depends on Mg(2+) as a cofactor.

It localises to the cytoplasm. The protein localises to the nucleus. It is found in the nucleolus. In terms of biological role, hydrolyzes ATP, and can also hydrolyze GTP with lower efficiency. Has lower affinity for GTP. This chain is Obg-like ATPase 1, found in Bos taurus (Bovine).